The following is a 1159-amino-acid chain: WASH complex subunit 5 (1159 aa).

Belongs to the strumpellin family. Component of the WASH complex.

Its subcellular location is the early endosome. Functionally, acts at least in part as component of the WASH complex which seems to regulate washc1 nucleation-promoting factor (NPF) activity and is required for its membrane targeting during endosomal sorting. The polypeptide is WASH complex subunit 5 (Danio rerio (Zebrafish)).